The sequence spans 192 residues: Cytochrome b-245 light chain (192 aa).

The Cytoplasmic portion of the chain corresponds to 2–7 (GQIEWA). A helical transmembrane segment spans residues 8-30 (MWANEQALASGLILITGGIVATA). Residues 31–35 (GRFTQ) lie on the Extracellular side of the membrane. A helical transmembrane segment spans residues 36-53 (WYFGAYSIAAGVLICLLE). At 54-69 (YPRGKRKKGSTMERCG) the chain is on the cytoplasmic side. Residues 70–80 (QKYLTSVVKLF) lie within the membrane without spanning it. Residues 81–86 (GPLTRN) lie on the Cytoplasmic side of the membrane. The chain crosses the membrane as a helical span at residues 87–104 (YYVRAALHFLLSVPAGFL). Position 105 (leucine 105) is a topological domain, extracellular. The chain crosses the membrane as a helical span at residues 106 to 126 (ATILGTVCLAIASVIYLLAAI). Topologically, residues 127–192 (RGEQWTPIEP…NPMPVTDEVV (66 aa)) are cytoplasmic. Residues 134–192 (IEPKPKERPQVGGTIKQPPTNPPPRPPAEVRKKPSEGEEEAASAGGPQVNPMPVTDEVV) form a disordered region. Threonine 147 is modified (phosphothreonine). Residue lysine 149 forms a Glycyl lysine isopeptide (Lys-Gly) (interchain with G-Cter in ubiquitin) linkage. Residues serine 168 and serine 176 each carry the phosphoserine modification.

This sequence belongs to the p22phox family. Component of the phagocyte NADPH oxidase core complex/cytochrome b558 complex, composed of CYBB (heavy chain (beta)) and CYBA (light chain (alpha)). Component of the phagocyte NADPH oxidase complex composed of an obligatory core heterodimer formed by the membrane proteins CYBA and CYBB and the cytosolic regulatory subunits NCF1/p47-phox, NCF2/p67-phox, NCF4/p40-phox and the small GTPase RAC1 or RAC2. Interacts with NCF1 (via SH3 domain). Interacts with SH3PXD2A. Interacts with DUOX1, DUOX2 and TPO. Interacts with NOX4; this interaction mediates superoxide generation. Interacts with calprotectin (S100A8/9). Interacts with GBP7. Interacts with NOXO1. Forms a heterodimer with NOX3 and is essential for activity and cell membrane localization of NOX3. Interacts with NOX1. Post-translationally, ubiquitinated at Lys-149 likely by RNF145. Phosphorylation at Thr-147 enhances NADPH oxidase activity by promoting NCF1/p47-phox binding. The strongest level of expression is found in kidney, peritoneal neutrophils and peritoneal macrophages, and a lower level in spleen and small intestine. Very low level of expression can be noted in brain, liver, testis, and heart.

The protein resides in the cell membrane. Its function is as follows. Subunit of NADPH oxidase complexes that is required for the NADPH oxidase activity that generates, in various cell types, superoxide from molecular oxygen utilizing NADPH as an electron donor. Subunit of the phagocyte NADPH oxidase complex that mediates the transfer of electrons from cytosolic NADPH to O2 to produce the superoxide anion (O2(-)). In the activated complex, electrons are first transferred from NADPH to flavin adenine dinucleotide (FAD) and subsequently transferred via two heme molecules to molecular oxygen, producing superoxide through an outer-sphere reaction. Activation of the NADPH oxidase complex is initiated by the assembly of cytosolic subunits of the NADPH oxidase complex with the core NADPH oxidase complex to form a complex at the plasma membrane or phagosomal membrane. This activation process is initiated by phosphorylation dependent binding of the cytosolic NCF1/p47-phox subunit to the C-terminus of CYBA/p22-phox. Aassociates with NOX3 to form a functional NADPH oxidase constitutively generating superoxide. This is Cytochrome b-245 light chain from Mus musculus (Mouse).